Consider the following 698-residue polypeptide: Epithelial sodium channel subunit alpha (698 aa).

Residues 1 to 70 (MLDHTRAPEL…SAPRQPTEEE (70 aa)) are disordered. Over 1–110 (MLDHTRAPEL…CSKHNRMKTA (110 aa)) the chain is Cytoplasmic. A helical transmembrane segment spans residues 111–131 (FWAVLWLCTFGMMYWQFALLF). Over 132–589 (EEYLSYPVSL…SQWSLWFGSS (458 aa)) the chain is Extracellular. 3 cysteine pairs are disulfide-bonded: C158-C332, C256-C263, and C309-C316. N190 carries N-linked (GlcNAc...) asparagine glycosylation. Positions 200 to 270 (RRRSSRDLLG…SDCFYQTYSS (71 aa)) are gating release of inhibition by proteolysis (GRIP); protease-sensitive region that is responsible for the proteolytic activation of the channel. Positions 213-243 (HPLQRLRTPPPPYSGRTARSGSSSVRDNNPQ) are disordered. The segment covering 229-243 (TARSGSSSVRDNNPQ) has biased composition (polar residues). Residue N259 is glycosylated (N-linked (GlcNAc...) asparagine). Residues N320, N339, and N424 are each glycosylated (N-linked (GlcNAc...) asparagine). 7 cysteine pairs are disulfide-bonded: C421–C506, C443–C483, C443–C502, C447–C498, C456–C483, C456–C506, and C458–C472. N538 carries an N-linked (GlcNAc...) asparagine glycan. A helical transmembrane segment spans residues 590–610 (VLSVVEMAELIFDLLVITLLM). Topologically, residues 611-698 (LLRRFRSRYW…DCSACALAAL (88 aa)) are cytoplasmic. The interval 637-663 (ASSFPSRFCPHPTSPPPSLPQQGMTPP) is disordered. The PY motif; recruits WW domain-containing proteins and is thereby required for ubiquitination and inhibition of the channel by NEDD4 and NEDD4L signature appears at 669–673 (PPPAY).

It belongs to the amiloride-sensitive sodium channel (TC 1.A.6) family. SCNN1A subfamily. In terms of assembly, heterotrimer; containing an alpha/SCNN1A, a beta/SCNN1B and a gamma/SCNN1G subunit. Interacts with WWP1 (via WW domains). Interacts with WWP2 (via WW domains); inhibits the channel. Interacts with BPIFA1; the interaction is indirect via SCNN1B and inhibits the proteolytic processing of SCNN1A and SCNN1G and the activation of ENaC. Interacts with the full-length immature form of PCSK9 (pro-PCSK9). Ubiquitinated. Can be ubiquitinated at multiple sites and undergo monoubiquitination and polyubiquitination. Ubiquitination by NEDD4 or NEDD4L inhibits the ENaC channel through endocytosis, intracellular retention and degradation of its individual subunits. Post-translationally, N-glycosylated. In terms of processing, ENaC is activated through the proteolytic maturation of its subunits. Furin cleaves the SCNN1A subunit, which results in a stepwise increase in the open probability of the channel due to the release of an inhibitory tract. BPIFA1, which is recruited by the SCNN1B subunit, prevents the proteolytic activation of ENaC. In terms of tissue distribution, detected in kidney, lung and testis (at protein level). In the testis, detected within the seminiferous tubules but not in the interstitial cells (at protein level).

The protein localises to the apical cell membrane. It localises to the cell projection. It is found in the cilium. The protein resides in the cytoplasmic granule. Its subcellular location is the cytoplasm. The protein localises to the cytoplasmic vesicle. It localises to the secretory vesicle. It is found in the acrosome. The protein resides in the flagellum. It catalyses the reaction Na(+)(in) = Na(+)(out). With respect to regulation, originally identified and characterized by its inhibition by the diuretic drug amiloride. This is one of the three pore-forming subunits of the heterotrimeric epithelial sodium channel (ENaC), a critical regulator of sodium balance and fluid homeostasis. ENaC operates in epithelial tissues, where it mediates the electrodiffusion of sodium ions from extracellular fluid through the apical membrane of cells, with water following osmotically. It plays a key role in maintaining sodium homeostasis through electrogenic sodium reabsorption in the kidneys. Additionally, ENaC is essential for airway surface liquid homeostasis, which is crucial for proper mucus clearance. This chain is Epithelial sodium channel subunit alpha, found in Rattus norvegicus (Rat).